A 232-amino-acid polypeptide reads, in one-letter code: Phosphatidylserine decarboxylase proenzyme (232 aa).

The active-site Schiff-base intermediate with substrate; via pyruvic acid is Ser190. Ser190 carries the post-translational modification Pyruvic acid (Ser); by autocatalysis.

This sequence belongs to the phosphatidylserine decarboxylase family. PSD-A subfamily. Heterodimer of a large membrane-associated beta subunit and a small pyruvoyl-containing alpha subunit. Requires pyruvate as cofactor. Post-translationally, is synthesized initially as an inactive proenzyme. Formation of the active enzyme involves a self-maturation process in which the active site pyruvoyl group is generated from an internal serine residue via an autocatalytic post-translational modification. Two non-identical subunits are generated from the proenzyme in this reaction, and the pyruvate is formed at the N-terminus of the alpha chain, which is derived from the carboxyl end of the proenzyme. The post-translation cleavage follows an unusual pathway, termed non-hydrolytic serinolysis, in which the side chain hydroxyl group of the serine supplies its oxygen atom to form the C-terminus of the beta chain, while the remainder of the serine residue undergoes an oxidative deamination to produce ammonia and the pyruvoyl prosthetic group on the alpha chain.

It localises to the cell membrane. The catalysed reaction is a 1,2-diacyl-sn-glycero-3-phospho-L-serine + H(+) = a 1,2-diacyl-sn-glycero-3-phosphoethanolamine + CO2. It functions in the pathway phospholipid metabolism; phosphatidylethanolamine biosynthesis; phosphatidylethanolamine from CDP-diacylglycerol: step 2/2. Catalyzes the formation of phosphatidylethanolamine (PtdEtn) from phosphatidylserine (PtdSer). The chain is Phosphatidylserine decarboxylase proenzyme from Rhizobium etli (strain ATCC 51251 / DSM 11541 / JCM 21823 / NBRC 15573 / CFN 42).